The primary structure comprises 435 residues: tRNA modification GTPase MnmE (435 aa).

Residues Arg24, Glu85, and Arg124 each coordinate (6S)-5-formyl-5,6,7,8-tetrahydrofolate. A TrmE-type G domain is found at 220–361; sequence GLVFTIVGAP…LRTALAERAR (142 aa). Residue Asn230 participates in K(+) binding. GTP is bound by residues 230–235, 249–255, and 274–277; these read NVGKSS, SAIAGTT, and DTAG. Ser234 lines the Mg(2+) pocket. Residues Ser249, Ile251, and Thr254 each coordinate K(+). Thr255 contributes to the Mg(2+) binding site. Lys435 is a binding site for (6S)-5-formyl-5,6,7,8-tetrahydrofolate.

It belongs to the TRAFAC class TrmE-Era-EngA-EngB-Septin-like GTPase superfamily. TrmE GTPase family. Homodimer. Heterotetramer of two MnmE and two MnmG subunits. Requires K(+) as cofactor.

Its subcellular location is the cytoplasm. Its function is as follows. Exhibits a very high intrinsic GTPase hydrolysis rate. Involved in the addition of a carboxymethylaminomethyl (cmnm) group at the wobble position (U34) of certain tRNAs, forming tRNA-cmnm(5)s(2)U34. This Gluconacetobacter diazotrophicus (strain ATCC 49037 / DSM 5601 / CCUG 37298 / CIP 103539 / LMG 7603 / PAl5) protein is tRNA modification GTPase MnmE.